A 2752-amino-acid polypeptide reads, in one-letter code: Piezo-type mechanosensitive ion channel component 2 (2752 aa).

The Cytoplasmic portion of the chain corresponds to 1–12; the sequence is MASEVVCGLIFR. Residues 13–24 form a helical membrane-spanning segment; that stretch reads LLLPICLAVACA. The Extracellular segment spans residues 25–30; the sequence is FRYNGL. A helical transmembrane segment spans residues 31–43; that stretch reads SFVYLIYLLLIPL. The Cytoplasmic segment spans residues 44 to 50; sequence FSEPTKT. The helical transmembrane segment at 51-76 threads the bilayer; the sequence is TMQGHTGRLLKSLCFISLSFLLLHII. At 77-122 the chain is on the extracellular side; sequence FHITLVSLEAQHRIAPGYNCSTWEKTFRQIGFESLKGADAGNGIRV. N-linked (GlcNAc...) asparagine glycosylation is present at Asn-95. Residues 123 to 141 traverse the membrane as a helical segment; that stretch reads FVPDIGMFIASLTIWLLCR. The Cytoplasmic segment spans residues 142 to 221; the sequence is NIVQKPVTDE…KEFIGNMITT (80 aa). Residues 222 to 237 form a helical membrane-spanning segment; that stretch reads AGKVVVTILLGSSGMM. The Extracellular segment spans residues 238 to 240; it reads LPS. Residues 241-258 form a helical membrane-spanning segment; that stretch reads LTSSVYFFVFLGLCTWWS. The Cytoplasmic portion of the chain corresponds to 259-264; that stretch reads WCRTFD. Residues 265-287 form a helical membrane-spanning segment; sequence PLLFSCLCVLLAIFTAGHLIGLY. The Extracellular segment spans residues 288–335; it reads LYQFQFFQEAVPPNDYYARLFGIKSVIQTDCSSTWKIIVNPDLSWYHH. Residues 336-355 form a helical membrane-spanning segment; it reads ANPILLLVMYYTLATLIRIW. At 356–492 the chain is on the cytoplasmic side; sequence LQEPLVQDEG…SIKVHAMVSV (137 aa). The interval 446–478 is disordered; it reads STPQYRWEPSDESSEKREEEEEEKEEFEEERSR. Residues 463–474 are compositionally biased toward acidic residues; that stretch reads EEEEEEKEEFEE. A helical membrane pass occupies residues 493–514; that stretch reads FQFIMKQSYICALIAMMAWSIT. The Extracellular segment spans residues 515–519; the sequence is YHSWL. A helical transmembrane segment spans residues 520–531; sequence TFVLLIWSCTLW. Residues 532–535 lie on the Cytoplasmic side of the membrane; that stretch reads MIRN. The helical transmembrane segment at 536 to 562 threads the bilayer; that stretch reads RRKYAMISSPFMVVYGNLLLILQYIWS. Topologically, residues 563-583 are extracellular; sequence FELPEIKKVPGFLEKKEPGEL. Residues 584-614 traverse the membrane as a helical segment; the sequence is ASKILFTITFWLLLRQHLTEQKALQEKEALL. Topologically, residues 615–685 are cytoplasmic; that stretch reads SEVKIGSQEN…GNLVVAMFIK (71 aa). The span at 623 to 632 shows a compositional bias: acidic residues; it reads ENEEKDEELQ. The interval 623–664 is disordered; sequence ENEEKDEELQDIQVEGEPKEEEEEEAKEEKQERKKVEQEEAE. The segment covering 649 to 660 has biased composition (basic and acidic residues); the sequence is KEEKQERKKVEQ. The chain crosses the membrane as a helical span at residues 686–699; that stretch reads YWIYVCGGMFFFVS. At 700 to 705 the chain is on the extracellular side; it reads FEGKIV. A helical membrane pass occupies residues 706–724; the sequence is MYKIIYMVLFLFCVALYQV. Residues 725–733 are Cytoplasmic-facing; sequence HYEWWRKIL. Residues 734–753 traverse the membrane as a helical segment; that stretch reads KYFWMSVVIYTMLVLIFIYT. The Extracellular segment spans residues 754–785; that stretch reads YQFENFPGLWQNMTGLKKEKLEDLGLKQFTVA. The helical transmembrane segment at 786 to 807 threads the bilayer; that stretch reads ELFTRIFIPTSFLLVCILHLHY. The Cytoplasmic segment spans residues 808–940; sequence FHDRFLELTD…QVFMWWILEL (133 aa). Ser-838 carries the post-translational modification Phosphoserine. Over residues 862–883 the composition is skewed to basic and acidic residues; sequence PGEEKLEGYSEKAQKGDLGKDS. The segment at 862–902 is disordered; that stretch reads PGEEKLEGYSEKAQKGDLGKDSEESEEDGEEEEESEEEEET. A compositionally biased stretch (acidic residues) spans 884–902; it reads EESEEDGEEEEESEEEEET. The chain crosses the membrane as a helical span at residues 941–956; that stretch reads HIIKIVSSYIIWVSVK. The Extracellular portion of the chain corresponds to 957–962; it reads EVSLFN. Residues 963–972 traverse the membrane as a helical segment; it reads YVFLISWAFA. At 973-980 the chain is on the cytoplasmic side; that stretch reads LPYAKLRR. Residues 981–1001 form a helical membrane-spanning segment; it reads LASSVCTVWTCVIIVCKMLYQ. The Extracellular portion of the chain corresponds to 1002–1057; sequence LQTIKPENFSVNCSLPNENQTNIPFNELNKSLLYSAPIDPTEWVGLRKSSPLLVYL. The N-linked (GlcNAc...) asparagine glycan is linked to Asn-1013. A disulfide bridge links Cys-1014 with Cys-1192. A helical transmembrane segment spans residues 1058–1082; that stretch reads RNNLLMLAILAFEVTIYRHQEYYRG. Residues 1083–1123 lie on the Cytoplasmic side of the membrane; the sequence is RNNLTAPVSRTIFHDITRLHLDDGLINCAKYFINYFFYKFG. Residues 1124–1138 form a helical membrane-spanning segment; the sequence is LETCFLMSVNVIGQR. Residues 1139–1140 lie on the Extracellular side of the membrane; it reads MD. A helical transmembrane segment spans residues 1141-1154; it reads FYAMIHACWLIAVL. The Cytoplasmic portion of the chain corresponds to 1155-1165; that stretch reads YRRRRKAIAEI. A helical transmembrane segment spans residues 1166–1185; it reads WPKYCCFLACIITFQYFICI. The Extracellular portion of the chain corresponds to 1186–1222; it reads GIPPAPCRDYPWRFKGASFNDNIIKWLYFPDFIVRPN. Residues 1223 to 1243 form a helical membrane-spanning segment; that stretch reads PVFLVYDFMLLLCASLQRQIF. Over 1244–1297 the chain is Cytoplasmic; sequence EDENKAAVRIMAGDNVEICMNLDAASFSQHNPVPDFIHCRSYLDMSKVIIFSYL. The helical transmembrane segment at 1298 to 1310 threads the bilayer; sequence FWFVLTIIFITGT. Topologically, residues 1311-1316 are extracellular; that stretch reads TRISIF. The chain crosses the membrane as a helical span at residues 1317–1329; it reads CMGYLVACFYFLL. At 1330 to 1338 the chain is on the cytoplasmic side; the sequence is FGGDLLLKP. The helical transmembrane segment at 1339–1364 threads the bilayer; that stretch reads IKSILRYWDWLIAYNVFVITMKNILS. The Extracellular portion of the chain corresponds to 1365-1413; sequence IGACGYIGTLVHNSCWLIQAFSLACTVKGYQMPAANSPCTLPSGEAGII. A helical transmembrane segment spans residues 1414 to 1430; it reads WDSICFAFLLLQRRVFM. The Cytoplasmic portion of the chain corresponds to 1431–1921; sequence SYYFLHVVAD…YAMYNTLVAR (491 aa). The stretch at 1458–1529 forms a coiled coil; the sequence is TIVKAVKARI…EREADKQKAK (72 aa). 3 disordered regions span residues 1488-1534, 1593-1636, and 1844-1868; these read QQKY…KKKQ, ALRQ…KKSD, and SQDDSAGKNRMAVSPDDSRTDKLGS. The span at 1594 to 1615 shows a compositional bias: basic residues; the sequence is LRQRHKEKKRSAREERKRRRKG. Residues 1922 to 1936 traverse the membrane as a helical segment; the sequence is SEMVCYFVIILNHMV. At 1937-1943 the chain is on the extracellular side; the sequence is SASMITL. Residues 1944–1955 traverse the membrane as a helical segment; the sequence is LLPILIFLWAML. Topologically, residues 1956–1961 are cytoplasmic; it reads SVPRPS. A helical transmembrane segment spans residues 1962–1983; it reads RRFWMMAIVYTEVAIVVKYFFQ. The Extracellular portion of the chain corresponds to 1984 to 2016; the sequence is FGFFPWNKNVEVNKDKPYHPPNIIGVEKKEGYV. A helical membrane pass occupies residues 2017–2035; that stretch reads LYDLIQLLALFFHRSILKC. Over 2036-2189 the chain is Cytoplasmic; sequence HGLWDEDDMT…HPEYSAVTDV (154 aa). Disordered stretches follow at residues 2047 to 2069 and 2090 to 2135; these read SGMAREESDDELSLGHGRRDSSD and QQTA…SVLS. A compositionally biased stretch (low complexity) spans 2100–2127; that stretch reads GSSSEPSQRSSFSSNRSQRGSTSTRNSS. The helical transmembrane segment at 2190–2209 threads the bilayer; it reads YVLMFLADTVDFIIIVFGFW. Residues 2210 to 2231 are Extracellular-facing; it reads AFGKHSAAADITSSLSEDQVPG. Residues 2232–2252 traverse the membrane as a helical segment; the sequence is PFLVMVLIQFGTMVVDRALYL. Topologically, residues 2253 to 2256 are cytoplasmic; it reads RKTV. A helical membrane pass occupies residues 2257 to 2280; that stretch reads LGKVIFQVILVFGIHFWMFFILPG. Residues 2281–2289 are Extracellular-facing; that stretch reads VTERKFSQN. A helical transmembrane segment spans residues 2290-2312; sequence LVAQLWYFVKCVYFGLSAYQIRC. Residues 2313 to 2397 are Cytoplasmic-facing; it reads GYPTRVLGNF…YPQPRGQKKK (85 aa). The helical transmembrane segment at 2398 to 2421 threads the bilayer; the sequence is KVVKYGMGGMIIVLLICIVWFPLL. The Extracellular segment spans residues 2422–2669; that stretch reads FMSLIKSVAG…PSLGFLAGYG (248 aa). The helical transmembrane segment at 2670 to 2690 threads the bilayer; it reads IMGLYASVVLVIGKFVREFFS. The Cytoplasmic portion of the chain corresponds to 2691 to 2752; it reads GISHSIMFEE…MIKWTREKTN (62 aa).

The protein belongs to the PIEZO (TC 1.A.75) family. In terms of assembly, homotrimer; the homotrimer forms a propeller-shaped Piezo channel with a cation-ion conducting pore. Heterotrimeric interaction may occur between PIEZO1 and PIEZO2. Interacts with STOML3. Interacts with TMC7; the interaction inhibits PIEZO2-conducted mechanically activated currents. Interacts with TMC1; the interaction may be part of the MET complex. Interacts with MDFIC (via C-terminus); the interaction prolongs Piezo channel inactivation. Interacts with MDFI (via C-terminus); the interaction prolongs Piezo channel inactivation.

It is found in the cell membrane. It carries out the reaction Ca(2+)(in) = Ca(2+)(out). With respect to regulation, regulated by auxillary subunits MDFIC and MDFI. Channel activity is inhibited by TMEM120A. Phosphatidic acid and lysophosphatidic acid inhibit PIEZO2 channel activity. Pore-forming subunit of the mechanosensitive non-specific cation Piezo channel required for rapidly adapting mechanically activated (MA) currents and has a key role in sensing touch and tactile pain. Piezo channels are homotrimeric three-blade propeller-shaped structures that utilize a cap-motion and plug-and-latch mechanism to gate their ion-conducting pathways. Expressed in sensory neurons, is essential for diverse physiological processes, including respiratory control, systemic metabolism, urinary function, and proprioception. Mediates airway stretch sensing, enabling efficient respiration at birth and maintaining normal breathing in adults. It regulates brown and beige adipose tissue morphology and function, preventing systemic hypermetabolism. In the lower urinary tract, acts as a sensor in both the bladder urothelium and innervating sensory neurons being required for bladder-stretch sensing and urethral micturition reflexes, ensuring proper urinary function. Additionally, PIEZO2 serves as the principal mechanotransducer in proprioceptors, facilitating proprioception and coordinated body movements. In inner ear hair cells, PIEZO1/2 subunits may constitute part of the mechanotransducer (MET) non-selective cation channel complex where they may act as pore-forming ion-conducting component in the complex. Required for Merkel-cell mechanotransduction. Plays a major role in light-touch mechanosensation. This is Piezo-type mechanosensitive ion channel component 2 from Homo sapiens (Human).